Here is a 490-residue protein sequence, read N- to C-terminus: Glutamate--tRNA ligase (490 aa).

The short motif at 10-20 (PSPTGRMHVGN) is the 'HIGH' region element. Positions 109, 111, 140, and 142 each coordinate Zn(2+). The short motif at 257–261 (KLSKR) is the 'KMSKS' region element. Residue K260 coordinates ATP.

It belongs to the class-I aminoacyl-tRNA synthetase family. Glutamate--tRNA ligase type 1 subfamily. In terms of assembly, monomer. Requires Zn(2+) as cofactor.

It localises to the cytoplasm. It carries out the reaction tRNA(Glu) + L-glutamate + ATP = L-glutamyl-tRNA(Glu) + AMP + diphosphate. Functionally, catalyzes the attachment of glutamate to tRNA(Glu) in a two-step reaction: glutamate is first activated by ATP to form Glu-AMP and then transferred to the acceptor end of tRNA(Glu). The sequence is that of Glutamate--tRNA ligase from Lachnoclostridium phytofermentans (strain ATCC 700394 / DSM 18823 / ISDg) (Clostridium phytofermentans).